The primary structure comprises 248 residues: UPF0246 protein RPR_00055 (248 aa).

This sequence belongs to the UPF0246 family.

This Rickettsia peacockii (strain Rustic) protein is UPF0246 protein RPR_00055.